Reading from the N-terminus, the 344-residue chain is Methionine import ATP-binding protein MetN (344 aa).

The ABC transporter domain maps to 2-241 (IEINQVNKVF…PKTELAHDFI (240 aa)). Position 38–45 (38–45 (GSSGAGKS)) interacts with ATP.

The protein belongs to the ABC transporter superfamily. Methionine importer (TC 3.A.1.24) family. The complex is composed of two ATP-binding proteins (MetN), two transmembrane proteins (MetI) and a solute-binding protein (MetQ).

The protein resides in the cell inner membrane. It carries out the reaction L-methionine(out) + ATP + H2O = L-methionine(in) + ADP + phosphate + H(+). The enzyme catalyses D-methionine(out) + ATP + H2O = D-methionine(in) + ADP + phosphate + H(+). Its function is as follows. Part of the ABC transporter complex MetNIQ involved in methionine import. Responsible for energy coupling to the transport system. The protein is Methionine import ATP-binding protein MetN of Vibrio vulnificus (strain YJ016).